Reading from the N-terminus, the 146-residue chain is Cytochrome c oxidase assembly factor 1 homolog (146 aa).

Over 1–14 (MMWQKYAGSRRSMP) the chain is Mitochondrial matrix. A helical membrane pass occupies residues 15–37 (LGARILFHGVFYAGGFAIVYYLI). The Mitochondrial intermembrane segment spans residues 38–146 (QKFHSRALYY…GENGDEVKKE (109 aa)).

Belongs to the COA1 family. In terms of assembly, component of the MITRAC (mitochondrial translation regulation assembly intermediate of cytochrome c oxidase complex) complex, the core components of this complex being COA3/MITRAC12 and COX14. Interacts with COX17 and COA6. Part of the mitochondrial complex I assembly/MCIA complex that comprises at least the core subunits TMEM126B, NDUFAF1, ECSIT and ACAD9 and complement subunits such as COA1 and TMEM186.

The protein resides in the mitochondrion inner membrane. Its function is as follows. Component of the MITRAC (mitochondrial translation regulation assembly intermediate of cytochrome c oxidase complex) complex, that regulates cytochrome c oxidase assembly. MITRAC complexes regulate both translation of mitochondrial encoded components and assembly of nuclear-encoded components imported in mitochondrion. Required for assembly of mitochondrial respiratory chain complex I and complex IV. As part of the MCIA complex, required for efficient assembly of the mitochondrial complex I. This Homo sapiens (Human) protein is Cytochrome c oxidase assembly factor 1 homolog.